We begin with the raw amino-acid sequence, 530 residues long: Bifunctional purine biosynthesis protein PurH (530 aa).

In terms of domain architecture, MGS-like spans 1–148 (MNNARPIRRA…KNHKDVTIVV (148 aa)).

This sequence belongs to the PurH family.

It carries out the reaction (6R)-10-formyltetrahydrofolate + 5-amino-1-(5-phospho-beta-D-ribosyl)imidazole-4-carboxamide = 5-formamido-1-(5-phospho-D-ribosyl)imidazole-4-carboxamide + (6S)-5,6,7,8-tetrahydrofolate. The catalysed reaction is IMP + H2O = 5-formamido-1-(5-phospho-D-ribosyl)imidazole-4-carboxamide. It functions in the pathway purine metabolism; IMP biosynthesis via de novo pathway; 5-formamido-1-(5-phospho-D-ribosyl)imidazole-4-carboxamide from 5-amino-1-(5-phospho-D-ribosyl)imidazole-4-carboxamide (10-formyl THF route): step 1/1. The protein operates within purine metabolism; IMP biosynthesis via de novo pathway; IMP from 5-formamido-1-(5-phospho-D-ribosyl)imidazole-4-carboxamide: step 1/1. The polypeptide is Bifunctional purine biosynthesis protein PurH (Aliivibrio fischeri (strain MJ11) (Vibrio fischeri)).